The chain runs to 546 residues: Cyclic GMP-AMP synthase-like receptor (546 aa).

Polar residues predominate over residues 1 to 10; that stretch reads MPVGSRQNRV. Disordered stretches follow at residues 1–116 and 134–186; these read MPVG…CASR and AKQE…RLTN. The segment covering 35-45 has biased composition (basic and acidic residues); sequence YTERKERKDVQ. The segment covering 69 to 80 has biased composition (low complexity); it reads TSRTLRQTSQSR. Composition is skewed to basic and acidic residues over residues 82–95 and 145–174; these read EVLERNESGSDCKK and KEGYADEEQKIENSTQERKVVNTSMEDKAT. Positions 175 to 186 are enriched in polar residues; that stretch reads SHSTKGSFRLTN. Residues Ser243 and 255-257 each bind ATP; that span reads EFD. Residues Glu255, Asp257, and Asp374 each coordinate Mg(2+). GTP-binding positions include Asp374 and 428–435; that span reads RTSFSLAE. Residues 432 to 435, Lys455, and 470 to 474 contribute to the ATP site; these read SLAE and SYHLK.

This sequence belongs to the mab-21 family. Mg(2+) serves as cofactor. Requires Mn(2+) as cofactor.

It catalyses the reaction GTP + ATP = 2',3'-cGAMP + 2 diphosphate. It carries out the reaction GTP + ATP = pppGp(2'-5')A + diphosphate. The catalysed reaction is pppGp(2'-5')A = 2',3'-cGAMP + diphosphate. Functionally, nucleotidyltransferase that catalyzes the formation of cyclic GMP-AMP (2',3'-cGAMP) from ATP and GTP and plays a key role in innate immunity. Directly binds some unknown ligand, activating the nucleotidyltransferase activity, leading to synthesis of 2',3'-cGAMP, a second messenger that binds to and activates Sting, thereby triggering the immune response via activation of the NF-kappa-B transcription factor. The sequence is that of Cyclic GMP-AMP synthase-like receptor from Exaiptasia diaphana (Tropical sea anemone).